We begin with the raw amino-acid sequence, 891 residues long: Putative alpha,alpha-trehalose-phosphate synthase [UDP-forming] 100 kDa subunit (891 aa).

T88 is subject to Phosphothreonine. Positions 88–126 (TGGSMTPGLGAMSPIPGSGRSSPLYTQPRSRATSPSRVR) are disordered. The span at 106–124 (GRSSPLYTQPRSRATSPSR) shows a compositional bias: polar residues. Phosphoserine is present on residues S108 and S109. The segment at 132–613 (AAPGIGAGAL…VTGFETKLKK (482 aa)) is glycosyltransferase.

This sequence in the N-terminal section; belongs to the glycosyltransferase 20 family.

The enzyme catalyses D-glucose 6-phosphate + UDP-alpha-D-glucose = alpha,alpha-trehalose 6-phosphate + UDP + H(+). This is Putative alpha,alpha-trehalose-phosphate synthase [UDP-forming] 100 kDa subunit from Schizosaccharomyces pombe (strain 972 / ATCC 24843) (Fission yeast).